The chain runs to 20 residues: Glutathione S-transferase 2 (20 aa).

Residues 1–20 (GYKVTYFAIRGLAEPIXLLL) enclose the GST N-terminal domain. Y6 is a glutathione binding site.

The protein belongs to the GST superfamily. Sigma family.

It catalyses the reaction RX + glutathione = an S-substituted glutathione + a halide anion + H(+). Functionally, conjugation of reduced glutathione to a wide number of exogenous and endogenous hydrophobic electrophiles. The protein is Glutathione S-transferase 2 (GST2) of Ascaris suum (Pig roundworm).